The primary structure comprises 96 residues: Aspartyl/glutamyl-tRNA(Asn/Gln) amidotransferase subunit C (96 aa).

Belongs to the GatC family. In terms of assembly, heterotrimer of A, B and C subunits.

The catalysed reaction is L-glutamyl-tRNA(Gln) + L-glutamine + ATP + H2O = L-glutaminyl-tRNA(Gln) + L-glutamate + ADP + phosphate + H(+). It catalyses the reaction L-aspartyl-tRNA(Asn) + L-glutamine + ATP + H2O = L-asparaginyl-tRNA(Asn) + L-glutamate + ADP + phosphate + 2 H(+). In terms of biological role, allows the formation of correctly charged Asn-tRNA(Asn) or Gln-tRNA(Gln) through the transamidation of misacylated Asp-tRNA(Asn) or Glu-tRNA(Gln) in organisms which lack either or both of asparaginyl-tRNA or glutaminyl-tRNA synthetases. The reaction takes place in the presence of glutamine and ATP through an activated phospho-Asp-tRNA(Asn) or phospho-Glu-tRNA(Gln). The protein is Aspartyl/glutamyl-tRNA(Asn/Gln) amidotransferase subunit C of Exiguobacterium sibiricum (strain DSM 17290 / CCUG 55495 / CIP 109462 / JCM 13490 / 255-15).